Here is a 180-residue protein sequence, read N- to C-terminus: Endoribonuclease YbeY (180 aa).

Residues histidine 118, histidine 122, and histidine 128 each coordinate Zn(2+).

Belongs to the endoribonuclease YbeY family. Zn(2+) is required as a cofactor.

The protein localises to the cytoplasm. In terms of biological role, single strand-specific metallo-endoribonuclease involved in late-stage 70S ribosome quality control and in maturation of the 3' terminus of the 16S rRNA. The sequence is that of Endoribonuclease YbeY from Rhodococcus opacus (strain B4).